We begin with the raw amino-acid sequence, 257 residues long: Imidazole glycerol phosphate synthase subunit HisF (257 aa).

Catalysis depends on residues Asp11 and Asp130.

This sequence belongs to the HisA/HisF family. In terms of assembly, heterodimer of HisH and HisF.

It is found in the cytoplasm. It carries out the reaction 5-[(5-phospho-1-deoxy-D-ribulos-1-ylimino)methylamino]-1-(5-phospho-beta-D-ribosyl)imidazole-4-carboxamide + L-glutamine = D-erythro-1-(imidazol-4-yl)glycerol 3-phosphate + 5-amino-1-(5-phospho-beta-D-ribosyl)imidazole-4-carboxamide + L-glutamate + H(+). The protein operates within amino-acid biosynthesis; L-histidine biosynthesis; L-histidine from 5-phospho-alpha-D-ribose 1-diphosphate: step 5/9. Functionally, IGPS catalyzes the conversion of PRFAR and glutamine to IGP, AICAR and glutamate. The HisF subunit catalyzes the cyclization activity that produces IGP and AICAR from PRFAR using the ammonia provided by the HisH subunit. In Proteus mirabilis (strain HI4320), this protein is Imidazole glycerol phosphate synthase subunit HisF.